Consider the following 178-residue polypeptide: ATP-dependent protease subunit HslV (178 aa).

Thr7 is a catalytic residue. Residues Gly162, Cys165, and Thr168 each contribute to the Na(+) site.

The protein belongs to the peptidase T1B family. HslV subfamily. In terms of assembly, a double ring-shaped homohexamer of HslV is capped on each side by a ring-shaped HslU homohexamer. The assembly of the HslU/HslV complex is dependent on binding of ATP.

It localises to the cytoplasm. It carries out the reaction ATP-dependent cleavage of peptide bonds with broad specificity.. Its activity is regulated as follows. Allosterically activated by HslU binding. Its function is as follows. Protease subunit of a proteasome-like degradation complex believed to be a general protein degrading machinery. The sequence is that of ATP-dependent protease subunit HslV from Burkholderia mallei (strain ATCC 23344).